We begin with the raw amino-acid sequence, 480 residues long: Cysteine--tRNA ligase (480 aa).

Cysteine 27 serves as a coordination point for Zn(2+). The 'HIGH' region motif lies at 29-39 (PTVYNYAHIGN). Residues cysteine 221, histidine 246, and glutamate 250 each coordinate Zn(2+). Positions 278-282 (KMSKS) match the 'KMSKS' region motif. ATP is bound at residue lysine 281.

The protein belongs to the class-I aminoacyl-tRNA synthetase family. As to quaternary structure, monomer. Zn(2+) serves as cofactor.

The protein localises to the cytoplasm. It carries out the reaction tRNA(Cys) + L-cysteine + ATP = L-cysteinyl-tRNA(Cys) + AMP + diphosphate. This chain is Cysteine--tRNA ligase, found in Borreliella afzelii (strain PKo) (Borrelia afzelii).